Reading from the N-terminus, the 339-residue chain is Phenylalanine--tRNA ligase alpha subunit (339 aa).

Position 247 (E247) interacts with Mg(2+).

Belongs to the class-II aminoacyl-tRNA synthetase family. Phe-tRNA synthetase alpha subunit type 1 subfamily. As to quaternary structure, tetramer of two alpha and two beta subunits. The cofactor is Mg(2+).

It localises to the cytoplasm. The catalysed reaction is tRNA(Phe) + L-phenylalanine + ATP = L-phenylalanyl-tRNA(Phe) + AMP + diphosphate + H(+). The polypeptide is Phenylalanine--tRNA ligase alpha subunit (Deinococcus deserti (strain DSM 17065 / CIP 109153 / LMG 22923 / VCD115)).